We begin with the raw amino-acid sequence, 174 residues long: MSRAANRRPGLSAGQLAAATASPLLSLLLLLACCADACRGTPISPQRLPPEQELQLWNEIPEACASFLSVDSQPQASVALRKLCRVLMEIFQKPQEQTEKDNAKRFLFHYSKTQKLGNSNVVSSVVHPLLQLVPQLHERRMKRYKVNEYQGPVAPSGGFFLFRPRNGKRSTSFI.

The N-terminal stretch at 1–37 (MSRAANRRPGLSAGQLAAATASPLLSLLLLLACCADA) is a signal peptide. The propeptide occupies 38-105 (CRGTPISPQR…EQTEKDNAKR (68 aa)). Met-141 bears the Methionine sulfoxide; partial mark. Position 166 is an asparagine amide (Asn-166). Positions 170-174 (STSFI) are excised as a propeptide.

The protein belongs to the NmU family. In terms of tissue distribution, expressed throughout the gastrointestinal tract with highest levels in the duodenum and jejunum. Low levels in spinal cord, hypothalamus, and stomach. Neuromedin-U-23: Expressed in the small intestine and the pituitary gland (at protein level). Neuromedin precursor-related peptides: Expressed in pituitary gland and small intestine (at protein level).

The protein resides in the secreted. Ligand for receptors NMUR1 and NMUR2. Receptor-binding is very tight if not irreversible and triggers an increase in the cytosolic Ca(2+) concentration. Stimulates muscle contractions of specific regions of the gastrointestinal tract. In rat, NMU stimulates contractions of stomach circular muscle. Functionally, does not function as a ligand for either NMUR1 or NMUR2. Indirectly induces prolactin release although its potency is much lower than that of neuromedin precursor-related peptide 36. In terms of biological role, does not function as a ligand for either NMUR1 or NMUR2. Indirectly induces prolactin release from lactotroph cells in the pituitary gland, probably via the hypothalamic dopaminergic system. In Rattus norvegicus (Rat), this protein is Neuromedin-U (Nmu).